A 190-amino-acid chain; its full sequence is Glutathione peroxidase 2 (190 aa).

Selenocysteine 40 is an active-site residue. Selenocysteine 40 is a non-standard amino acid (selenocysteine).

This sequence belongs to the glutathione peroxidase family. In terms of assembly, homotetramer. Mucosal epithelium of the gastrointestinal tract.

It is found in the cytoplasm. Its subcellular location is the cytosol. It carries out the reaction 2 glutathione + H2O2 = glutathione disulfide + 2 H2O. It catalyses the reaction a hydroperoxy polyunsaturated fatty acid + 2 glutathione = a hydroxy polyunsaturated fatty acid + glutathione disulfide + H2O. The catalysed reaction is tert-butyl hydroperoxide + 2 glutathione = tert-butanol + glutathione disulfide + H2O. The enzyme catalyses cumene hydroperoxide + 2 glutathione = 2-phenylpropan-2-ol + glutathione disulfide + H2O. It carries out the reaction (13S)-hydroperoxy-(9Z,11E)-octadecadienoate + 2 glutathione = (13S)-hydroxy-(9Z,11E)-octadecadienoate + glutathione disulfide + H2O. It catalyses the reaction (5S)-hydroperoxy-(6E,8Z,11Z,14Z)-eicosatetraenoate + 2 glutathione = (5S)-hydroxy-(6E,8Z,11Z,14Z)-eicosatetraenoate + glutathione disulfide + H2O. The catalysed reaction is (12R)-hydroperoxy-(5Z,8Z,10E,14Z)-eicosatetraenoate + 2 glutathione = (12R)-hydroxy-(5Z,8Z,10E,14Z)-eicosatetraenoate + glutathione disulfide + H2O. The enzyme catalyses (15S)-hydroperoxy-(5Z,8Z,11Z,13E)-eicosatetraenoate + 2 glutathione = (15S)-hydroxy-(5Z,8Z,11Z,13E)-eicosatetraenoate + glutathione disulfide + H2O. Functionally, catalyzes the reduction of hydroperoxides in a glutathione-dependent manner thus regulating cellular redox homeostasis. Can reduce small soluble hydroperoxide such as H2O2. Can reduce cumene hydroperoxide and tert-butyl hydroperoxide, as well as several fatty acid-derived hydroperoxides. Cannot reduce phosphatidycholine hydroperoxide. This is Glutathione peroxidase 2 (Gpx2) from Rattus norvegicus (Rat).